The chain runs to 417 residues: Gamma-glutamyl phosphate reductase (417 aa).

Belongs to the gamma-glutamyl phosphate reductase family.

It is found in the cytoplasm. It carries out the reaction L-glutamate 5-semialdehyde + phosphate + NADP(+) = L-glutamyl 5-phosphate + NADPH + H(+). The protein operates within amino-acid biosynthesis; L-proline biosynthesis; L-glutamate 5-semialdehyde from L-glutamate: step 2/2. Catalyzes the NADPH-dependent reduction of L-glutamate 5-phosphate into L-glutamate 5-semialdehyde and phosphate. The product spontaneously undergoes cyclization to form 1-pyrroline-5-carboxylate. The sequence is that of Gamma-glutamyl phosphate reductase from Legionella pneumophila (strain Paris).